Reading from the N-terminus, the 349-residue chain is MTELTLQNHRRTMWHFIPGLALSAVITGVALWGGAIPAVAGAGFSALTLAILLGMVIGNTVYPQIWKQCDGGVLFAKQHLLRLGIILYGFRLTFSQIADVGISGIVIDVLTLSSTFMLACFLGQKVFGLDRHTSWLIGAGSSICGAAAVLATEPVVKAEASKVTVAVATVVIFGTIAIFLYPAMYPLLAHWFSPETYGIYIGSTMHEVAQVVAAGHAVSPDAENAAVIAKMLRVMMLAPFLIILAARVKQLSPATGAEKSKITIPWFAIFFIVVAIFNSFHLLPKAVVDMLVTLDTVLLAMAMAALGLTTHVSALKKAGAKPLLMALALFAWLIIGGGAINVLIHSLIA.

The Periplasmic portion of the chain corresponds to 1-12 (MTELTLQNHRRT). Residues 13–35 (MWHFIPGLALSAVITGVALWGGA) form a helical membrane-spanning segment. Residues 36 to 38 (IPA) lie on the Cytoplasmic side of the membrane. A helical membrane pass occupies residues 39-61 (VAGAGFSALTLAILLGMVIGNTV). Residues 62-99 (YPQIWKQCDGGVLFAKQHLLRLGIILYGFRLTFSQIAD) are Periplasmic-facing. The helical transmembrane segment at 100-122 (VGISGIVIDVLTLSSTFMLACFL) threads the bilayer. The Cytoplasmic portion of the chain corresponds to 123 to 131 (GQKVFGLDR). Residues 132–151 (HTSWLIGAGSSICGAAAVLA) traverse the membrane as a helical segment. Residues 152 to 162 (TEPVVKAEASK) lie on the Periplasmic side of the membrane. A helical membrane pass occupies residues 163 to 185 (VTVAVATVVIFGTIAIFLYPAMY). Residues 186–261 (PLLAHWFSPE…SPATGAEKSK (76 aa)) are Cytoplasmic-facing. A helical membrane pass occupies residues 262-284 (ITIPWFAIFFIVVAIFNSFHLLP). Over 285 to 290 (KAVVDM) the chain is Periplasmic. Residues 291-313 (LVTLDTVLLAMAMAALGLTTHVS) form a helical membrane-spanning segment. Over 314–322 (ALKKAGAKP) the chain is Cytoplasmic. A helical transmembrane segment spans residues 323 to 345 (LLMALALFAWLIIGGGAINVLIH). Residues 346-349 (SLIA) are Periplasmic-facing.

This sequence belongs to the UPF0324 family.

It localises to the cell inner membrane. In Salmonella typhi, this protein is UPF0324 inner membrane protein YeiH (yeiH).